We begin with the raw amino-acid sequence, 1073 residues long: Pleckstrin homology domain-containing family G member 5 (1073 aa).

5 disordered regions span residues methionine 1 to leucine 28, valine 91 to arginine 135, proline 217 to leucine 261, glycine 278 to glutamate 309, and serine 367 to aspartate 388. Composition is skewed to basic and acidic residues over residues proline 217–lysine 231 and glutamate 249–serine 260. Residues serine 367–serine 381 are compositionally biased toward acidic residues. The region spanning histidine 406–cysteine 598 is the DH domain. The 101-residue stretch at glutamine 654–asparagine 754 folds into the PH domain. Disordered stretches follow at residues glutamine 762 to glycine 818, threonine 833 to aspartate 873, and proline 899 to glutamine 925. The span at leucine 777–glutamate 790 shows a compositional bias: acidic residues. 2 stretches are compositionally biased toward polar residues: residues serine 791 to leucine 809 and valine 844 to serine 864. Threonine 793 is subject to Phosphothreonine. A Phosphoserine modification is found at serine 798. Positions valine 900–serine 915 are enriched in pro residues. Position 909 is a phosphothreonine (threonine 909). Residues serine 911, serine 936, and serine 941 each carry the phosphoserine modification. A disordered region spans residues methionine 993–glutamine 1046. A compositionally biased stretch (polar residues) spans glycine 1030 to proline 1039.

As to quaternary structure, interacts with GIPC1/synectin and RHOA. Expressed in neurons and glial cells of the peripheral nervous system, with highest levels of expression in the brain and sciatic nerve endoneurium. Isoform 2 is expressed at detectable levels only in malignant cells.

The protein resides in the cytoplasm. It is found in the perinuclear region. Its subcellular location is the cell membrane. The protein localises to the cell junction. It localises to the cell projection. The protein resides in the lamellipodium. Its function is as follows. Functions as a guanine exchange factor (GEF) for RAB26 and thus regulates autophagy of synaptic vesicles in axon terminal of motoneurons. Involved in the control of neuronal cell differentiation. Plays a role in angiogenesis through regulation of endothelial cells chemotaxis. Also affects the migration, adhesion, and matrix/bone degradation in macrophages and osteoclasts. The sequence is that of Pleckstrin homology domain-containing family G member 5 (Plekhg5) from Mus musculus (Mouse).